The chain runs to 211 residues: Histidine biosynthesis bifunctional protein HisIE (211 aa).

The segment at 1-122 (MSFKTAEVSS…DPQEESQMVW (122 aa)) is phosphoribosyl-AMP cyclohydrolase. Positions 123–211 (LHQLEQLLAA…VINKLKERHK (89 aa)) are phosphoribosyl-ATP pyrophosphohydrolase.

In the N-terminal section; belongs to the PRA-CH family. This sequence in the C-terminal section; belongs to the PRA-PH family.

Its subcellular location is the cytoplasm. The catalysed reaction is 1-(5-phospho-beta-D-ribosyl)-ATP + H2O = 1-(5-phospho-beta-D-ribosyl)-5'-AMP + diphosphate + H(+). It carries out the reaction 1-(5-phospho-beta-D-ribosyl)-5'-AMP + H2O = 1-(5-phospho-beta-D-ribosyl)-5-[(5-phospho-beta-D-ribosylamino)methylideneamino]imidazole-4-carboxamide. It functions in the pathway amino-acid biosynthesis; L-histidine biosynthesis; L-histidine from 5-phospho-alpha-D-ribose 1-diphosphate: step 2/9. Its pathway is amino-acid biosynthesis; L-histidine biosynthesis; L-histidine from 5-phospho-alpha-D-ribose 1-diphosphate: step 3/9. The chain is Histidine biosynthesis bifunctional protein HisIE from Vibrio vulnificus (strain CMCP6).